The chain runs to 346 residues: 3-keto-steroid reductase ERG27 (346 aa).

Positions 19, 42, and 48 each coordinate NADP(+). Active-site proton donor residues include serine 182 and tyrosine 205. NADP(+)-binding residues include tyrosine 205, lysine 209, and serine 241. The Lowers pKa of active site Tyr role is filled by lysine 209. The helical transmembrane segment at 242–262 (FSFFQYLNVFTYYGMLFLFYL) threads the bilayer. N-linked (GlcNAc...) asparagine glycosylation is present at asparagine 272.

It belongs to the short-chain dehydrogenases/reductases (SDR) family. ERG27 subfamily. Heterotetramer of ERG25, ERG26, ERG27 and ERG28. ERG28 acts as a scaffold to tether ERG27 and other 4,4-demethylation-related enzymes, forming a demethylation enzyme complex, in the endoplasmic reticulum. Interacts with ERG25 and ERG28. Also interacts with ERG7, but only in lipid particles.

It is found in the endoplasmic reticulum membrane. The protein localises to the lipid droplet. It catalyses the reaction 3-dehydro-4alpha-methylzymosterol + NADPH + H(+) = 4alpha-methylzymosterol + NADP(+). It participates in steroid biosynthesis; zymosterol biosynthesis; zymosterol from lanosterol: step 5/6. In terms of biological role, 3-keto-steroid reductase; part of the third module of ergosterol biosynthesis pathway that includes the late steps of the pathway. ERG27 is a catalytic component of the C-4 demethylation complex that catalyzes the reduction of the keto group on the C-3. The third module or late pathway involves the ergosterol synthesis itself through consecutive reactions that mainly occur in the endoplasmic reticulum (ER) membrane. Firstly, the squalene synthase ERG9 catalyzes the condensation of 2 farnesyl pyrophosphate moieties to form squalene, which is the precursor of all steroids. Squalene synthase is crucial for balancing the incorporation of farnesyl diphosphate (FPP) into sterol and nonsterol isoprene synthesis. Secondly, the squalene epoxidase ERG1 catalyzes the stereospecific oxidation of squalene to (S)-2,3-epoxysqualene, which is considered to be a rate-limiting enzyme in steroid biosynthesis. Then, the lanosterol synthase ERG7 catalyzes the cyclization of (S)-2,3 oxidosqualene to lanosterol, a reaction that forms the sterol core. In the next steps, lanosterol is transformed to zymosterol through a complex process involving various demethylation, reduction and desaturation reactions. The lanosterol 14-alpha-demethylase ERG11 (also known as CYP51) catalyzes C14-demethylation of lanosterol to produce 4,4'-dimethyl cholesta-8,14,24-triene-3-beta-ol, which is critical for ergosterol biosynthesis. The C-14 reductase ERG24 reduces the C14=C15 double bond of 4,4-dimethyl-cholesta-8,14,24-trienol to produce 4,4-dimethyl-cholesta-8,24-dienol. 4,4-dimethyl-cholesta-8,24-dienol is substrate of the C-4 demethylation complex ERG25-ERG26-ERG27 in which ERG25 catalyzes the three-step monooxygenation required for the demethylation of 4,4-dimethyl and 4alpha-methylsterols, ERG26 catalyzes the oxidative decarboxylation that results in a reduction of the 3-beta-hydroxy group at the C-3 carbon to an oxo group, and ERG27 is responsible for the reduction of the keto group on the C-3. ERG28 has a role as a scaffold to help anchor ERG25, ERG26 and ERG27 to the endoplasmic reticulum and ERG29 regulates the activity of the iron-containing C4-methylsterol oxidase ERG25. Then, the sterol 24-C-methyltransferase ERG6 catalyzes the methyl transfer from S-adenosyl-methionine to the C-24 of zymosterol to form fecosterol. The C-8 sterol isomerase ERG2 catalyzes the reaction which results in unsaturation at C-7 in the B ring of sterols and thus converts fecosterol to episterol. The sterol-C5-desaturase ERG3 then catalyzes the introduction of a C-5 double bond in the B ring to produce 5-dehydroepisterol. The C-22 sterol desaturase ERG5 further converts 5-dehydroepisterol into ergosta-5,7,22,24(28)-tetraen-3beta-ol by forming the C-22(23) double bond in the sterol side chain. Finally, ergosta-5,7,22,24(28)-tetraen-3beta-ol is substrate of the C-24(28) sterol reductase ERG4 to produce ergosterol. Its function is as follows. Facilitates the association of ERG7 with lipid particles preventing its digestion in the endoplasmic reticulum and the lipid particles. The chain is 3-keto-steroid reductase ERG27 from Candida albicans (Yeast).